The primary structure comprises 251 residues: Triosephosphate isomerase (251 aa).

9–11 (NWK) provides a ligand contact to substrate. His-95 (electrophile) is an active-site residue. The active-site Proton acceptor is the Glu-167. Substrate is bound by residues Gly-173, Ser-212, and 233–234 (GG).

This sequence belongs to the triosephosphate isomerase family. As to quaternary structure, homodimer.

It localises to the cytoplasm. The catalysed reaction is D-glyceraldehyde 3-phosphate = dihydroxyacetone phosphate. The protein operates within carbohydrate biosynthesis; gluconeogenesis. It functions in the pathway carbohydrate degradation; glycolysis; D-glyceraldehyde 3-phosphate from glycerone phosphate: step 1/1. Involved in the gluconeogenesis. Catalyzes stereospecifically the conversion of dihydroxyacetone phosphate (DHAP) to D-glyceraldehyde-3-phosphate (G3P). This is Triosephosphate isomerase from Vibrio sp. (strain ANT-300).